Reading from the N-terminus, the 1593-residue chain is ABC transporter C family member 8 (1593 aa).

The next 10 helical transmembrane spans lie at 27–47 (VVMTLPAIYLLIFGMKRLYYL), 75–95 (VIVSILLVAWKILFFIVIVSI), 100–120 (FEILYSVVTVVQWTVSLGLVY), 135–155 (LYWVFAFFVATVKLRTLTLAI), 169–189 (FSYFVGYCLILILSITSVLFF), 280–300 (FYIAALFKIIQDLLIFVGPTL), 318–338 (YDGLIYALLYFLAPVVQSLLL), 392–412 (LCPYLHMIWSAPLQLAISLVL), 419–439 (ASVFAGLGIMLVMIPINLAIS), and 505–525 (LLLWSMSPVFVSVSTFTVYIL). One can recognise an ABC transmembrane type-1 1 domain in the interval 280 to 561 (FYIAALFKII…LPSVVSSIIE (282 aa)). The ABC transporter 1 domain occupies 594–818 (VKIDNATLEW…GSHFTELMSH (225 aa)). 627–634 (GQVGSGKS) is an ATP binding site. A disordered region spans residues 816–938 (MSHDEQQQQL…PLQKGEKSSV (123 aa)). Residues 844–875 (GDNKESENNEEQNEEEEGENENLLEKVLRKSR) are a coiled coil. Over residues 851-865 (NNEEQNEEEEGENEN) the composition is skewed to acidic residues. The segment covering 877 to 886 (RSPSPSSNRN) has biased composition (low complexity). A compositionally biased stretch (acidic residues) spans 905–922 (EEDEQDERELMEDIDIDG). The next 5 helical transmembrane spans lie at 1005–1025 (IGVLLATCIIGFYVLTQLLSI), 1064–1084 (AKYYLSIYVAFSCGTIAATFL), 1157–1177 (IIVIAWVSPFIILAMVPVGAL), 1251–1271 (LAIRLEFLGACLVSCAVLYTV), and 1280–1300 (GTAGLVITYALAITGNMNWMV). An ABC transmembrane type-1 2 domain is found at 1010–1308 (ATCIIGFYVL…MVRMSCDLEN (299 aa)). The 235-residue stretch at 1344–1578 (IVFKNLWLTY…QDSIYYSLVK (235 aa)) folds into the ABC transporter 2 domain. Residue 1378-1385 (GRTGAGKS) participates in ATP binding.

The protein belongs to the ABC transporter superfamily. ABCC family. Conjugate transporter (TC 3.A.1.208) subfamily.

The protein resides in the membrane. The sequence is that of ABC transporter C family member 8 (abcC8) from Dictyostelium discoideum (Social amoeba).